A 193-amino-acid polypeptide reads, in one-letter code: Rho-related GTP-binding protein RhoA-B (193 aa).

Residues 12–19 (GDGACGKT), 30–37 (FPEVYVPT), 59–63 (DTAGQ), 117–120 (NKKD), and 160–162 (SAK) contribute to the GTP site. (Microbial infection) O-linked (GlcNAc) tyrosine; by Yersinia Afp18 glycosylation occurs at Y34. At C190 the chain carries Cysteine methyl ester. A lipid anchor (S-geranylgeranyl cysteine) is attached at C190. Positions 191–193 (CLL) are cleaved as a propeptide — removed in mature form.

Belongs to the small GTPase superfamily. Rho family. (Microbial infection) Glycosylated at Tyr-34 by Yersinia ruckeri toxin Afp18. Mono-O-GlcNAcylation by Afp18 inhibits RhoA activation by guanine nucleotide exchange factors and blocks RhoA signaling.

It localises to the cell membrane. Its function is as follows. Regulates a signal transduction pathway linking plasma membrane receptors to the assembly of focal adhesions and actin stress fibers. In Danio rerio (Zebrafish), this protein is Rho-related GTP-binding protein RhoA-B.